Reading from the N-terminus, the 257-residue chain is RING1 and YY1-binding protein B (257 aa).

Disordered regions lie at residues 1–24 and 45–257; these read MGDK…GFWD and RKGT…DESF. The segment at 19–48 adopts a RanBP2-type zinc-finger fold; that stretch reads DNGFWDCSVCTFRNSAEAFKCSICDVRKGT. Positions 74-129 are enriched in basic and acidic residues; that stretch reads PKKEKKEKPERPEKDRAEEERPDINPPDEHPVEQRDKDKSEKEQPEKEKKDREKEI. Over residues 149–168 the composition is skewed to polar residues; the sequence is HQSPPSERNSIQSGKSTTKT. A compositionally biased stretch (basic residues) spans 169 to 178; it reads KNSHNSRPKL. The span at 209–233 shows a compositional bias: low complexity; that stretch reads TSSTSSSTVTSSASSEQQHQSSGSE.

Its subcellular location is the nucleus. It localises to the cytoplasm. May be implicated in the regulation of the transcription as a repressor of the transcriptional activity of E4TF1. The protein is RING1 and YY1-binding protein B (rybpb) of Danio rerio (Zebrafish).